The sequence spans 988 residues: Bifunctional glutamine synthetase adenylyltransferase/adenylyl-removing enzyme (988 aa).

The interval 1–474 (MSSSAIDADI…HYSKLFEGDP (474 aa)) is adenylyl removase. The interval 480 to 988 (LPIDYAGGAE…FNRLIGGNGE (509 aa)) is adenylyl transferase.

The protein belongs to the GlnE family. Mg(2+) serves as cofactor.

It catalyses the reaction [glutamine synthetase]-O(4)-(5'-adenylyl)-L-tyrosine + phosphate = [glutamine synthetase]-L-tyrosine + ADP. The enzyme catalyses [glutamine synthetase]-L-tyrosine + ATP = [glutamine synthetase]-O(4)-(5'-adenylyl)-L-tyrosine + diphosphate. Its function is as follows. Involved in the regulation of glutamine synthetase GlnA, a key enzyme in the process to assimilate ammonia. When cellular nitrogen levels are high, the C-terminal adenylyl transferase (AT) inactivates GlnA by covalent transfer of an adenylyl group from ATP to specific tyrosine residue of GlnA, thus reducing its activity. Conversely, when nitrogen levels are low, the N-terminal adenylyl removase (AR) activates GlnA by removing the adenylyl group by phosphorolysis, increasing its activity. The regulatory region of GlnE binds the signal transduction protein PII (GlnB) which indicates the nitrogen status of the cell. In Rhodopseudomonas palustris (strain HaA2), this protein is Bifunctional glutamine synthetase adenylyltransferase/adenylyl-removing enzyme.